Reading from the N-terminus, the 443-residue chain is Na(+)-translocating NADH-quinone reductase subunit A (443 aa).

The protein belongs to the NqrA family. In terms of assembly, composed of six subunits; NqrA, NqrB, NqrC, NqrD, NqrE and NqrF.

The enzyme catalyses a ubiquinone + n Na(+)(in) + NADH + H(+) = a ubiquinol + n Na(+)(out) + NAD(+). Its function is as follows. NQR complex catalyzes the reduction of ubiquinone-1 to ubiquinol by two successive reactions, coupled with the transport of Na(+) ions from the cytoplasm to the periplasm. NqrA to NqrE are probably involved in the second step, the conversion of ubisemiquinone to ubiquinol. In Mannheimia succiniciproducens (strain KCTC 0769BP / MBEL55E), this protein is Na(+)-translocating NADH-quinone reductase subunit A.